Reading from the N-terminus, the 503-residue chain is Probable cytosol aminopeptidase (503 aa).

Lysine 268 and aspartate 273 together coordinate Mn(2+). Lysine 280 is a catalytic residue. Positions 291, 350, and 352 each coordinate Mn(2+). Residue arginine 354 is part of the active site.

It belongs to the peptidase M17 family. Mn(2+) serves as cofactor.

The protein localises to the cytoplasm. The enzyme catalyses Release of an N-terminal amino acid, Xaa-|-Yaa-, in which Xaa is preferably Leu, but may be other amino acids including Pro although not Arg or Lys, and Yaa may be Pro. Amino acid amides and methyl esters are also readily hydrolyzed, but rates on arylamides are exceedingly low.. The catalysed reaction is Release of an N-terminal amino acid, preferentially leucine, but not glutamic or aspartic acids.. Its function is as follows. Presumably involved in the processing and regular turnover of intracellular proteins. Catalyzes the removal of unsubstituted N-terminal amino acids from various peptides. The protein is Probable cytosol aminopeptidase of Methylobacterium radiotolerans (strain ATCC 27329 / DSM 1819 / JCM 2831 / NBRC 15690 / NCIMB 10815 / 0-1).